We begin with the raw amino-acid sequence, 131 residues long: Probable ATP synthase subunit g 2, mitochondrial (131 aa).

Belongs to the ATPase g subunit family. Subunit of the F-type ATPase which has 2 components, CF(1) - the catalytic core - and CF(0) - the membrane proton channel.

The protein localises to the mitochondrion membrane. Functionally, mitochondrial membrane ATP synthase (F(1)F(0) ATP synthase or Complex V) produces ATP from ADP in the presence of a proton gradient across the membrane which is generated by electron transport complexes of the respiratory chain. F-type ATPases consist of two structural domains, F(1) - containing the extramembraneous catalytic core, and F(0) - containing the membrane proton channel, linked together by a central stalk and a peripheral stalk. During catalysis, ATP synthesis in the catalytic domain of F(1) is coupled via a rotary mechanism of the central stalk subunits to proton translocation. Part of the complex F(0) domain. Minor subunit located with subunit a in the membrane. The chain is Probable ATP synthase subunit g 2, mitochondrial from Caenorhabditis elegans.